Here is a 183-residue protein sequence, read N- to C-terminus: Adenine phosphoribosyltransferase (183 aa).

This sequence belongs to the purine/pyrimidine phosphoribosyltransferase family. Homodimer.

The protein localises to the cytoplasm. The catalysed reaction is AMP + diphosphate = 5-phospho-alpha-D-ribose 1-diphosphate + adenine. The protein operates within purine metabolism; AMP biosynthesis via salvage pathway; AMP from adenine: step 1/1. Catalyzes a salvage reaction resulting in the formation of AMP, that is energically less costly than de novo synthesis. In Shewanella sp. (strain MR-7), this protein is Adenine phosphoribosyltransferase.